Reading from the N-terminus, the 574-residue chain is Kelch-like protein 35 (574 aa).

The region spanning 40–110 is the BTB domain; it reads TDVVLRAGGR…VYGAGVRLRA (71 aa). In terms of domain architecture, BACK spans 146–248; that stretch reads SLALRRVAAA…APAYFLEKVE (103 aa). 6 Kelch repeats span residues 292–341, 343–385, 386–432, 434–480, 481–522, and 524–570; these read VIVV…ALRN, IYVS…ALQG, QLFA…PCAG, LYVI…SLED, TIYV…VCDG, and VHIL…TIVQ.

The protein is Kelch-like protein 35 (Klhl35) of Mus musculus (Mouse).